We begin with the raw amino-acid sequence, 313 residues long: Glyoxylate/hydroxypyruvate reductase A (313 aa).

Arg-228 is a catalytic residue. Residue His-276 is the Proton donor of the active site.

Belongs to the D-isomer specific 2-hydroxyacid dehydrogenase family. GhrA subfamily.

It localises to the cytoplasm. It carries out the reaction glycolate + NADP(+) = glyoxylate + NADPH + H(+). The enzyme catalyses (R)-glycerate + NAD(+) = 3-hydroxypyruvate + NADH + H(+). The catalysed reaction is (R)-glycerate + NADP(+) = 3-hydroxypyruvate + NADPH + H(+). Its function is as follows. Catalyzes the NADPH-dependent reduction of glyoxylate and hydroxypyruvate into glycolate and glycerate, respectively. The chain is Glyoxylate/hydroxypyruvate reductase A from Photorhabdus laumondii subsp. laumondii (strain DSM 15139 / CIP 105565 / TT01) (Photorhabdus luminescens subsp. laumondii).